Reading from the N-terminus, the 1691-residue chain is ADAMTS-like protein 3 (1691 aa).

An N-terminal signal peptide occupies residues 1–26 (MASWTSPWWVLIGMVFMHSPLPQTTA). Residues 75 to 124 (DGNWDAWGDWSDCSRTCGGGASYSLRRCLTGRNCEGQNIRYKTCSNHDCP) enclose the TSP type-1 1 domain. Disulfide bonds link Cys87–Cys118, Cys91–Cys123, and Cys102–Cys108. The N-linked (GlcNAc...) asparagine glycan is linked to Asn293. 3 consecutive TSP type-1 domains span residues 418–468 (PLPR…APKP), 478–535 (DCPK…IPCY), and 564–626 (EEPT…EACD). 3 disulfide bridges follow: Cys576-Cys620, Cys580-Cys625, and Cys591-Cys609. A glycan (N-linked (GlcNAc...) asparagine) is linked at Asn681. 3 consecutive TSP type-1 domains span residues 703–760 (CPPR…FDCP), 763–818 (WHIE…ARTD), and 819–881 (CPPH…PECS). Asn797 carries an N-linked (GlcNAc...) asparagine glycan. 3 disulfide bridges follow: Cys831–Cys875, Cys835–Cys880, and Cys846–Cys863. The Ig-like C2-type 1 domain maps to 896 to 992 (PQILSVQRVY…IAGSAQETVV (97 aa)). 2 N-linked (GlcNAc...) asparagine glycosylation sites follow: Asn915 and Asn927. Cys934 and Cys982 form a disulfide bridge. The N-linked (GlcNAc...) asparagine glycan is linked to Asn1102. The segment at 1146–1184 (PPAAQLRGETGSVSQSSHAKNSGKLTFKPKGPVLMRQSQ) is disordered. The span at 1156–1169 (GSVSQSSHAKNSGK) shows a compositional bias: polar residues. Positions 1185-1279 (PPSISFNKTI…GSDVESSSVL (95 aa)) constitute an Ig-like C2-type 2 domain. Asn1191 is a glycosylation site (N-linked (GlcNAc...) asparagine). Cys1215 and Cys1263 are joined by a disulfide. 10 N-linked (GlcNAc...) asparagine glycosylation sites follow: Asn1292, Asn1316, Asn1330, Asn1343, Asn1349, Asn1356, Asn1432, Asn1516, Asn1574, and Asn1591. In terms of domain architecture, Ig-like C2-type 3 spans 1296 to 1378 (PEHNHLSVVV…ATNALGKAVA (83 aa)). Cys1321 and Cys1367 are oxidised to a cystine. TSP type-1 domains follow at residues 1424–1482 (QEPF…NIRD) and 1483–1545 (CPAR…HPCV). Residues 1597 to 1644 (CDVCWHTGPWKPCTAACGRGFQSRKVDCIHTRSCKPVAKRHCVQKKKP) form the TSP type-1 10 domain. A PLAC domain is found at 1655–1691 (CDRDCTDTTHYCMFVKHLNLCSLDRYKQRCCQSCQEG).

Post-translationally, glycosylated. Can be O-fucosylated by POFUT2 on a serine or a threonine residue found within the consensus sequence C1-X(2)-(S/T)-C2-G of the TSP type-1 repeat domains where C1 and C2 are the first and second cysteine residue of the repeat, respectively. Fucosylated repeats can then be further glycosylated by the addition of a beta-1,3-glucose residue by the glucosyltransferase, B3GALTL. Fucosylation mediates the efficient secretion of ADAMTS family members. Can also be C-glycosylated with one or two mannose molecules on tryptophan residues within the consensus sequence W-X-X-W of the TPRs, and N-glycosylated. These other glycosylations can also facilitate secretion. Expressed in epithelial cells of the colon, fallopian tube, skin, breast, prostate, epididymis, liver, pancreatic islets and bile ducts, as well as by vascular endothelial cells, smooth muscle cells, fibroblasts, cortical and ganglionic neurons and cardiac myocytes. Also expressed by malignant epithelial cells in colon cancer, as well as breast, prostate, renal and skin tumors. Expression is significantly reduced in colon cancer compared to normal colon.

The protein resides in the secreted. Its subcellular location is the extracellular space. It is found in the extracellular matrix. The sequence is that of ADAMTS-like protein 3 (ADAMTSL3) from Homo sapiens (Human).